Consider the following 425-residue polypeptide: Fe(2+) transport protein 3, chloroplastic (425 aa).

A helical transmembrane segment spans residues 65 to 85 (FVAIASILLAGAAGVTIPLIG). Over 86-97 (RNRRFLQTDGNL) the chain is Cytoplasmic. The helical transmembrane segment at 98 to 118 (FVTAKAFAAGVILATGFVHML) threads the bilayer. The Lumenal segment spans residues 119-137 (AGGTEALKNPCLPDFPWSK). A helical transmembrane segment spans residues 138–158 (FPFPGFFAMIAALITLFVDFM). Residues 159-269 (GTQYYERKQE…GLDAVNGARH (111 aa)) are Cytoplasmic-facing. A helical transmembrane segment spans residues 270–290 (IVVSQVLELGIVSHSIIIGLS). The Lumenal segment spans residues 291–301 (LGVSQSPCTIR). Residues 302–322 (PLIAALSFHQFFEGFALGGCI) traverse the membrane as a helical segment. At 323–333 (SQAQFRNKSAT) the chain is on the cytoplasmic side. The helical transmembrane segment at 334–354 (IMACFFALTTPIGIGIGTAVA) threads the bilayer. The Lumenal segment spans residues 355-369 (SSFNSHSVGALVTEG). Residues 370-390 (ILDSLSAGILVYMALVDLIAA) form a helical membrane-spanning segment. The Cytoplasmic segment spans residues 391–404 (DFLSTKMRCNFRLQ). A helical membrane pass occupies residues 405-425 (IVSYVMLFLGAGLMSSLAIWA).

It belongs to the ZIP transporter (TC 2.A.5) family.

The protein resides in the plastid. The protein localises to the chloroplast thylakoid membrane. Its function is as follows. May play a role in the transport of iron in the plastids. In Arabidopsis thaliana (Mouse-ear cress), this protein is Fe(2+) transport protein 3, chloroplastic (IRT3).